We begin with the raw amino-acid sequence, 770 residues long: MFRYESLEDCPLDEDEDAFQGLGEEDEEIDQFNDDTFGSGAVDDDWQEAHERLAELEEKLPVAVNEQTGNGERDEMDLLGDHEENLAERLSKMVIENELEDPAIMRAVQTRPVLQPQPGSLNSSIWDGSEALRRIRGPLLAQEMPTVSVLEYALPQRPPQGPEDDRDLSERALPRRSTSPIIGSPPVRAVPIGTPPKQMAVPSFTQQILCPKPVHVRPPMPPRYPAPYGERMSPNQLCSVPNSSLLGHPFPPSVPPVLSPLQRAQLLGGAQLQPGRMSPSQFARVPGFVGSPLAAMNPKLLQGRVGQMLPPAPGFRAFFSAPPSATPPPQQHPPGPGPHLQNLRSQAPMFRPDTTHLHPQHRRLLHQRQQQNRNQHRNLNGAGDRGSHRSSHQDHLRKDPYANLMLQREKDWVSKIQMMQLQSTDPYLDDFYYQNYFEKLEKLSAAEEIQGDGPKKERTKLITPQVAKLEHTYKPVQFEGSLGKLTVSSVNNPRKMIDAVVTSRSEDDETKEKQVRDKRRKTLVIIEKTYSLLLDVEDYERRYLLSLEEERPALMDERKHKICSMYDNLRGKLPGQERPSDDHFVQIMCIRKGKRMVARILPFLSTEQAADILMTTARNLPFLIKKDAQDEVLPCLLSPFSLLLYHLPSVTITSLLQQLMNLPQSAATPAPSNPHLTAVLQNKFGLSLLLILLSRGEDLQSSDPATESTQNNQWTEVMFMATRELLRIPQAALAKPISIPTNLVSLFSRYVDRQKLNLLETKLQLVQGIR.

The tract at residues M1 to D26 is disordered. A region A; interaction with DDX6/RCK region spans residues M1–E84. The segment at M1–R397 is involved in nuclear foci localization. The span at L7–D26 shows a compositional bias: acidic residues. The segment at N85 to H388 is region N; interaction with decapping machinery. The Nuclear export signal signature appears at L86–I95. Residue S177 is modified to Phosphoserine. A Phosphothreonine modification is found at T178. A phosphoserine mark is found at S179 and S184. T194 bears the Phosphothreonine mark. R217, R223, and R263 each carry asymmetric dimethylarginine. Residues R223–R397 are involved in RNA-binding. S278 is subject to Phosphoserine. R284 is subject to Asymmetric dimethylarginine. Disordered regions lie at residues F315–R344 and Q360–P400. Pro residues predominate over residues S324–G337. The span at Q367–N380 shows a compositional bias: low complexity. The residue at position 385 (R385) is an Omega-N-methylarginine. Over residues R385–P400 the composition is skewed to basic and acidic residues. The interval R389–E448 is region H. The tract at residues K398–R770 is involved in nuclear speckle localization. Residues I449–R770 are region C.

It belongs to the PAT1 family. Interacts (via region A) with DDX6/RCK. Interacts (via region H and region C) with LSM1 and LSM4. Interacts (via region N) with DCP1A, DCP2, EDC3, EDC4 and XRN1. Interacts with the CCR4-NOT complex. Interacts with the Lsm-containing SMN-Sm protein complex. Interacts with EIF4ENIF1/4E-T.

It localises to the cytoplasm. It is found in the P-body. Its subcellular location is the nucleus. The protein resides in the PML body. The protein localises to the nucleus speckle. Functionally, RNA-binding protein involved in deadenylation-dependent decapping of mRNAs, leading to the degradation of mRNAs. Acts as a scaffold protein that connects deadenylation and decapping machinery. Required for cytoplasmic mRNA processing body (P-body) assembly. The polypeptide is Protein PAT1 homolog 1 (PATL1) (Pongo abelii (Sumatran orangutan)).